The primary structure comprises 373 residues: Spermidine/putrescine import ATP-binding protein PotA (373 aa).

The ABC transporter domain occupies 8–238; sequence FELRGVSKYF…PANLYVARFV (231 aa). Position 40–47 (40–47) interacts with ATP; sequence GPSGCGKT.

It belongs to the ABC transporter superfamily. Spermidine/putrescine importer (TC 3.A.1.11.1) family. In terms of assembly, the complex is composed of two ATP-binding proteins (PotA), two transmembrane proteins (PotB and PotC) and a solute-binding protein (PotD).

It localises to the cell inner membrane. The enzyme catalyses ATP + H2O + polyamine-[polyamine-binding protein]Side 1 = ADP + phosphate + polyamineSide 2 + [polyamine-binding protein]Side 1.. Part of the ABC transporter complex PotABCD involved in spermidine/putrescine import. Responsible for energy coupling to the transport system. The sequence is that of Spermidine/putrescine import ATP-binding protein PotA from Oleidesulfovibrio alaskensis (strain ATCC BAA-1058 / DSM 17464 / G20) (Desulfovibrio alaskensis).